Reading from the N-terminus, the 235-residue chain is Cell division protein FtsQ (235 aa).

Residues 1 to 6 are Cytoplasmic-facing; the sequence is MERLTR. The chain crosses the membrane as a helical span at residues 7-25; it reads WLLVMMAMLLAASGLVWFY. Residues 26–235 lie on the Periplasmic side of the membrane; the sequence is NSNHLPVKQV…DGLPEKESEE (210 aa). The POTRA domain occupies 30-99; that stretch reads LPVKQVSLKG…DTVEVVLTER (70 aa).

This sequence belongs to the FtsQ/DivIB family. FtsQ subfamily. As to quaternary structure, part of a complex composed of FtsB, FtsL and FtsQ.

Its subcellular location is the cell inner membrane. Essential cell division protein. May link together the upstream cell division proteins, which are predominantly cytoplasmic, with the downstream cell division proteins, which are predominantly periplasmic. May control correct divisome assembly. This chain is Cell division protein FtsQ, found in Neisseria meningitidis serogroup B (strain ATCC BAA-335 / MC58).